Here is a 756-residue protein sequence, read N- to C-terminus: Nucleomorphin (756 aa).

Residues 1 to 10 show a composition bias toward polar residues; sequence MDLDYSSDNS. A disordered region spans residues 1-113; that stretch reads MDLDYSSDNS…SQSNEDLSSS (113 aa). 2 stretches are compositionally biased toward low complexity: residues 16–66 and 75–94; these read NQNN…RPSS and NNNN…NNNN. Over residues 95–113 the composition is skewed to polar residues; the sequence is GATISHPPTSQSNEDLSSS. A BRCT domain is found at 124–216; the sequence is LNSNIFENLG…ELLGVENYLV (93 aa). Disordered stretches follow at residues 229 to 251, 272 to 298, 359 to 403, and 422 to 463; these read NSSQ…INEQ, PSSL…LKSE, KIDL…NKNN, and TSST…LLNL. Composition is skewed to low complexity over residues 285–298, 364–401, and 422–432; these read LQTQ…LKSE, NNNN…NKNK, and TSSTSSTLSSS. Basic residues predominate over residues 448–459; that stretch reads KSKKKFSQKKNH. Residues 464 to 480 carry the Nuclear localization signal motif; that stretch reads KKSYQDPEIIAHSRPRK. The interval 495 to 512 is calmodulin binding; the sequence is ANYISNLDGFKYYARANK. Residues 514 to 529 are compositionally biased toward polar residues; sequence SLNSNATTSGGNNRSI. Residues 514–587 form a disordered region; sequence SLNSNATTSG…SDEDDFDSDE (74 aa). Positions 536–587 are enriched in acidic residues; sequence YDDEEEDEEDEDEEDEEEDEEEEEEEEEEEEDYDDEDLNDEESDEDDFDSDE. Positions 537 to 588 are DEED region; the sequence is DDEEEDEEDEDEEDEEEDEEEEEEEEEEEEDYDDEDLNDEESDEDDFDSDED. 2 calmodulin binding regions span residues 589–606 and 596–613; these read VSRF…KIYK and KLLQ…RFEH. 2 disordered regions span residues 613–639 and 660–700; these read HSRQ…SHSR and LSPT…RTNI. Positions 668 to 691 are enriched in polar residues; the sequence is LSNQFHQDGGNNTTDGNLFNNFST.

As to quaternary structure, interacts with calmodulin and CBPD1 in the presence of Ca(2+).

The protein resides in the nucleus. This chain is Nucleomorphin (numA), found in Dictyostelium discoideum (Social amoeba).